We begin with the raw amino-acid sequence, 366 residues long: Probable dual-specificity RNA methyltransferase RlmN (366 aa).

E107 functions as the Proton acceptor in the catalytic mechanism. The 230-residue stretch at 113 to 342 (AEERMTACLS…MAQKFHVTVR (230 aa)) folds into the Radical SAM core domain. The cysteines at positions 120 and 353 are disulfide-linked. C127, C131, and C134 together coordinate [4Fe-4S] cluster. Residues 177 to 178 (GE), S210, 233 to 235 (SLH), and N310 each bind S-adenosyl-L-methionine. C353 serves as the catalytic S-methylcysteine intermediate.

It belongs to the radical SAM superfamily. RlmN family. [4Fe-4S] cluster is required as a cofactor.

It localises to the cytoplasm. The catalysed reaction is adenosine(2503) in 23S rRNA + 2 reduced [2Fe-2S]-[ferredoxin] + 2 S-adenosyl-L-methionine = 2-methyladenosine(2503) in 23S rRNA + 5'-deoxyadenosine + L-methionine + 2 oxidized [2Fe-2S]-[ferredoxin] + S-adenosyl-L-homocysteine. It catalyses the reaction adenosine(37) in tRNA + 2 reduced [2Fe-2S]-[ferredoxin] + 2 S-adenosyl-L-methionine = 2-methyladenosine(37) in tRNA + 5'-deoxyadenosine + L-methionine + 2 oxidized [2Fe-2S]-[ferredoxin] + S-adenosyl-L-homocysteine. Its function is as follows. Specifically methylates position 2 of adenine 2503 in 23S rRNA and position 2 of adenine 37 in tRNAs. This Chlorobium chlorochromatii (strain CaD3) protein is Probable dual-specificity RNA methyltransferase RlmN.